Reading from the N-terminus, the 683-residue chain is Boron transporter 4 (683 aa).

Topologically, residues 1–38 are cytoplasmic; the sequence is MEEERVDSSKRLFRGIVADLRGRALCYKEDWVAGLRSG. A helical transmembrane segment spans residues 39–59; that stretch reads FGILAPTTYIFFASALPVIAF. The Extracellular portion of the chain corresponds to 60 to 80; it reads GEQLSRDTEGALSTVETLAST. The chain crosses the membrane as a helical span at residues 81-101; sequence ALCGVIHSILGGQPLLILGVA. The Cytoplasmic segment spans residues 102–126; it reads EPTVLMYVYLYNFAIGRPELGKQLY. The helical transmembrane segment at 127–147 threads the bilayer; that stretch reads LAWAAWVCVWTALLLFVMAIL. Topologically, residues 148–160 are extracellular; sequence NTADIINRFTRVA. The chain crosses the membrane as a helical span at residues 161-181; the sequence is GELFGMLISVLFIQQAIKGMV. The Cytoplasmic segment spans residues 182–200; it reads SEFGMPKDEDSKLEKYKFE. Residues 201–221 form a helical membrane-spanning segment; it reads WLYTNGLLGLIFTFGLLYTAL. Residues 222–238 lie on the Extracellular side of the membrane; sequence KSRKARSWRYGTGWYRS. A helical membrane pass occupies residues 239-259; sequence FIADYGVPLMVVVWTALSFST. The Cytoplasmic segment spans residues 260–294; it reads PSKLPSGVPRRLFSPLPWDSPSLSHWTVIKDMGKV. The chain crosses the membrane as a helical span at residues 295–315; the sequence is SPGYIFAAFIPALMIAGLYFF. Residues 316–335 lie on the Extracellular side of the membrane; that stretch reads DHSVASQLAQQKEFNLKKPS. Residues 336–356 form a helical membrane-spanning segment; that stretch reads AYHYDILLLGFMTLICGLLGL. At 357–477 the chain is on the cytoplasmic side; sequence PPSNGVLPQS…EQRVSNLLQS (121 aa). The helical transmembrane segment at 478–498 threads the bilayer; the sequence is LLVAGAVLAMPAIKLIPTSIL. Topologically, residues 499–565 are extracellular; that stretch reads WGYFAYMAID…QIFYFGLCYG (67 aa). Residues 566–586 form a helical membrane-spanning segment; sequence VTWIPVAGIMFPVPFFLLIAI. Residues 587–683 lie on the Cytoplasmic side of the membrane; it reads RQYILPKLFN…GDGDMSTTRE (97 aa). Disordered regions lie at residues 617–638 and 661–683; these read NPLE…GDAE and KGNQ…TTRE.

Belongs to the anion exchanger (TC 2.A.31.3) family. As to expression, expressed in the distal sides of epidermal cells in the elongation zone of roots.

Its subcellular location is the membrane. Efflux-type boron transporter polarly localized in roots. Boron is essential for maintaining the integrity of plants cell walls. The chain is Boron transporter 4 (BOR4) from Arabidopsis thaliana (Mouse-ear cress).